A 251-amino-acid chain; its full sequence is UDP-Glc:alpha-D-GlcNAc-diphosphoundecaprenol beta-1,3-glucosyltransferase WfaP (251 aa).

It belongs to the glycosyltransferase 2 family. Requires Mn(2+) as cofactor. The cofactor is Mg(2+).

It is found in the cell inner membrane. The enzyme catalyses N-acetyl-alpha-D-glucosaminyl-di-trans,octa-cis-undecaprenyl diphosphate + UDP-alpha-D-glucose = beta-D-Glc-(1-&gt;3)-alpha-D-GlcNAc-di-trans,octa-cis-undecaprenyl diphosphate + UDP + H(+). Its pathway is bacterial outer membrane biogenesis; lipopolysaccharide biosynthesis. Its function is as follows. Catalyzes the addition of Glc, the second sugar moiety of the O56-antigen repeating unit, to GlcNAc-pyrophosphate-undecaprenol. The chain is UDP-Glc:alpha-D-GlcNAc-diphosphoundecaprenol beta-1,3-glucosyltransferase WfaP (wfaP) from Escherichia coli.